The following is a 595-amino-acid chain: Zinc finger protein 467 (595 aa).

The segment at 1-67 is disordered; sequence MRETLEALSS…EEGAHTEQAE (67 aa). Lys97 is covalently cross-linked (Glycyl lysine isopeptide (Lys-Gly) (interchain with G-Cter in SUMO2)). C2H2-type zinc fingers lie at residues 160–182, 188–210, 216–238, 244–266, 272–294, and 300–322; these read YGCG…QRLH, CACP…QRSH, FPCS…LRTH, YPCA…QKTH, FPCT…QRIH, and YQCA…QRVH. Positions 313-350 are disordered; sequence QHLVRHQRVHQTAGPARPSPDSSASPHSTAPSPTPSFP. Over residues 325-343 the composition is skewed to low complexity; that stretch reads AGPARPSPDSSASPHSTAP. 6 C2H2-type zinc fingers span residues 355 to 377, 431 to 453, 459 to 481, 487 to 509, 515 to 537, and 543 to 565; these read FACS…QCLH, FFCP…PRVH, FACT…SRAH, FACA…QAVH, HACA…QAIH, and FSCP…QLIH. Residue Lys368 forms a Glycyl lysine isopeptide (Lys-Gly) (interchain with G-Cter in SUMO2) linkage.

The protein belongs to the krueppel C2H2-type zinc-finger protein family. As to quaternary structure, interacts with STAT3. Enhances STAT3 activity by keeping it in the nucleus.

It is found in the nucleus. Its function is as follows. Transcription factor that promotes adipocyte differentiation and suppresses osteoblast differentiation in the bone marrow. Enhances the osteoclast-supporting ability of stromal cells. Binds with STAT3 the consensus sequence 5'-CTTCTGGGAAGA-3' of the acute phase response element (APRE). Transactivates several promoters including FOS, OSM and PPARG. Recruits a histone deacetylase complex. This Homo sapiens (Human) protein is Zinc finger protein 467 (ZNF467).